Reading from the N-terminus, the 421-residue chain is Testin (421 aa).

The 108-residue stretch at 92-199 (MILTNPVAAK…GDVKLPCEMD (108 aa)) folds into the PET domain. The segment at 133–164 (EKQPVAGSEGAQYRKKQLAKQLPAHDQDPSKC) is disordered. Over residues 155–164 (PAHDQDPSKC) the composition is skewed to basic and acidic residues. 3 LIM zinc-binding domains span residues 234–297 (YSCY…CDSE), 299–359 (PRCA…NHAV), and 362–421 (QGCH…KMMS).

This sequence belongs to the prickle / espinas / testin family. Interacts via LIM domain 1 with ZYX. Interacts (via LIM domain 3) with ENAH and VASP. Interacts with ALKBH4, talin, actin, alpha-actinin, GRIP1 and PXN. Interacts (via LIM domain 2) with ACTL7A (via N-terminus). Heterodimer with ACTL7A; the heterodimer interacts with ENAH to form a heterotrimer.

The protein localises to the cytoplasm. It localises to the cell junction. Its subcellular location is the focal adhesion. Functionally, scaffold protein that may play a role in cell adhesion, cell spreading and in the reorganization of the actin cytoskeleton. Plays a role in the regulation of cell proliferation. May act as a tumor suppressor. The protein is Testin (TES) of Saimiri boliviensis boliviensis (Bolivian squirrel monkey).